The following is a 274-amino-acid chain: THAP domain-containing protein 8 (274 aa).

The segment at 1–85 (MPKYCRAPNC…LRPDAVPSIF (85 aa)) adopts a THAP-type zinc-finger fold. Positions 83–121 (SIFSRGPPAKSQRRTRSTQKPVSPPPPLQKNTPLPQSPA) are disordered.

This is THAP domain-containing protein 8 (THAP8) from Homo sapiens (Human).